We begin with the raw amino-acid sequence, 370 residues long: Cytochrome b (370 aa).

Transmembrane regions (helical) follow at residues 25–45 (FGSMLLACLTLQLLTGFFLAV), 69–90 (WMMQNLHAIGASMFFICIYIHI), 105–125 (WLSGTTLLIMLMATAFFGYVL), and 170–190 (FFALHFILPFGIISLSSLHIL). Heme b is bound by residues H75 and H89. Heme b is bound by residues H174 and H188. H193 is an a ubiquinone binding site. 4 helical membrane-spanning segments follow: residues 218-238 (YKDMLMLTIMTIMLLTIVSFF), 280-300 (LGGALALXMSIMILLTLPFTH), 312-332 (FMQLTFWTFTATFLVISWTAT), and 339-358 (FTTISQVAALMYFLFFISNP).

It belongs to the cytochrome b family. In terms of assembly, the cytochrome bc1 complex contains 3 respiratory subunits (MT-CYB, CYC1 and UQCRFS1), 2 core proteins (UQCRC1 and UQCRC2) and probably 6 low-molecular weight proteins. It depends on heme b as a cofactor.

Its subcellular location is the mitochondrion inner membrane. Its function is as follows. Component of the ubiquinol-cytochrome c reductase complex (complex III or cytochrome b-c1 complex) that is part of the mitochondrial respiratory chain. The b-c1 complex mediates electron transfer from ubiquinol to cytochrome c. Contributes to the generation of a proton gradient across the mitochondrial membrane that is then used for ATP synthesis. This Chilabothrus exsul (Abaco Island boa) protein is Cytochrome b (MT-CYB).